A 193-amino-acid polypeptide reads, in one-letter code: Holliday junction branch migration complex subunit RuvA (193 aa).

Residues Met-1–Ala-63 form a domain I region. The domain II stretch occupies residues Glu-64 to Ile-142. The flexible linker stretch occupies residues Ser-143–Ser-145. The interval Ser-145–Leu-193 is domain III.

Belongs to the RuvA family. Homotetramer. Forms an RuvA(8)-RuvB(12)-Holliday junction (HJ) complex. HJ DNA is sandwiched between 2 RuvA tetramers; dsDNA enters through RuvA and exits via RuvB. An RuvB hexamer assembles on each DNA strand where it exits the tetramer. Each RuvB hexamer is contacted by two RuvA subunits (via domain III) on 2 adjacent RuvB subunits; this complex drives branch migration. In the full resolvosome a probable DNA-RuvA(4)-RuvB(12)-RuvC(2) complex forms which resolves the HJ.

It localises to the cytoplasm. The RuvA-RuvB-RuvC complex processes Holliday junction (HJ) DNA during genetic recombination and DNA repair, while the RuvA-RuvB complex plays an important role in the rescue of blocked DNA replication forks via replication fork reversal (RFR). RuvA specifically binds to HJ cruciform DNA, conferring on it an open structure. The RuvB hexamer acts as an ATP-dependent pump, pulling dsDNA into and through the RuvAB complex. HJ branch migration allows RuvC to scan DNA until it finds its consensus sequence, where it cleaves and resolves the cruciform DNA. This chain is Holliday junction branch migration complex subunit RuvA, found in Flavobacterium psychrophilum (strain ATCC 49511 / DSM 21280 / CIP 103535 / JIP02/86).